The sequence spans 335 residues: MSAKLGKSSSLLTQTSEECNGILTEKMEEEEQTCDPDSSLHWSSSYSPETFRQQFRQFGYQDSPGPHEALSRLWELCHLWLRPEVHTKEQILELLVLEQFLAILPKELQAWVQKHHPENGEETVTMLEDVERELDGPKQIFFGRRKDMIAEKLAPSEITEELPSSQLMPVKKQLQGASWELQSLRPHDEDIKTTNVKSASRQKTSLGIELHCNVSNILHMNGSQSSTYRGTYEQDGRFEKRQGNPSWKKQQKCDECGKIFSQSSALILHQRIHSGKKPYACDECAKAFSRSAILIQHRRTHTGEKPYKCHDCGKAFSQSSNLFRHRKRHIRKKVP.

Residues 52 to 134 (RQQFRQFGYQ…TMLEDVEREL (83 aa)) form the SCAN box domain. 3 C2H2-type zinc fingers span residues 251–273 (QKCDECGKIFSQSSALILHQRIH), 279–301 (YACDECAKAFSRSAILIQHRRTH), and 307–329 (YKCHDCGKAFSQSSNLFRHRKRH).

The protein belongs to the krueppel C2H2-type zinc-finger protein family. In terms of assembly, isoforms 1 and 2 can both homo- and hetero-associate. As to expression, expressed strongly in liver, moderately in skeletal muscle and weakly in kidney, pancreas, spleen and prostate.

It localises to the nucleus. The protein localises to the cytoplasm. Isoform 1 and isoform 2 act as DNA-dependent transcriptional repressors. This is Zinc finger protein 396 (ZNF396) from Homo sapiens (Human).